Reading from the N-terminus, the 414-residue chain is Isocitrate dehydrogenase [NADP] cytoplasmic (414 aa).

Residue Ser2 is modified to N-acetylserine. Tyr42 is modified (phosphotyrosine). An NADP(+)-binding site is contributed by 75 to 77; sequence TIT. Thr77 provides a ligand contact to substrate. At Lys81 the chain carries N6-acetyllysine. Arg82 is an NADP(+) binding site. Substrate contacts are provided by residues 94 to 100 and Arg109; that span reads SPNGTIR. Lys126 is modified (N6-succinyllysine). Arg132 and Lys212 together coordinate substrate. N6-acetyllysine occurs at positions 224 and 233. Position 252 (Asp252) interacts with Mn(2+). Lys260 lines the NADP(+) pocket. 2 residues coordinate Mn(2+): Asp275 and Asp279. Residue 310 to 315 participates in NADP(+) binding; sequence GTVTRH. The residue at position 321 (Lys321) is an N6-acetyllysine. An NADP(+)-binding site is contributed by Asn328. Ser389 bears the Phosphoserine mark. Lys400 bears the N6-succinyllysine mark.

This sequence belongs to the isocitrate and isopropylmalate dehydrogenases family. Homodimer. Requires Mg(2+) as cofactor. Mn(2+) is required as a cofactor. Acetylation at Lys-374 dramatically reduces catalytic activity.

It localises to the cytoplasm. It is found in the cytosol. The catalysed reaction is D-threo-isocitrate + NADP(+) = 2-oxoglutarate + CO2 + NADPH. Its function is as follows. Catalyzes the NADP(+)-dependent oxidative decarboxylation of isocitrate (D-threo-isocitrate) to 2-ketoglutarate (2-oxoglutarate), which is required by other enzymes such as the phytanoyl-CoA dioxygenase. Plays a critical role in the generation of NADPH, an important cofactor in many biosynthesis pathways. May act as a corneal epithelial crystallin and may be involved in maintaining corneal epithelial transparency. The chain is Isocitrate dehydrogenase [NADP] cytoplasmic (IDH1) from Ovis aries (Sheep).